The primary structure comprises 478 residues: Adenosylhomocysteinase (478 aa).

Thr67, Asp144, and Glu204 together coordinate substrate. Position 205-207 (205-207 (TTT)) interacts with NAD(+). 2 residues coordinate substrate: Lys234 and Asp238. Residues Asn239, 268–273 (GYGDVG), Glu291, Asn326, 347–349 (IGH), and Asn392 each bind NAD(+).

The protein belongs to the adenosylhomocysteinase family. It depends on NAD(+) as a cofactor.

The protein resides in the cytoplasm. It catalyses the reaction S-adenosyl-L-homocysteine + H2O = L-homocysteine + adenosine. Its pathway is amino-acid biosynthesis; L-homocysteine biosynthesis; L-homocysteine from S-adenosyl-L-homocysteine: step 1/1. In terms of biological role, may play a key role in the regulation of the intracellular concentration of adenosylhomocysteine. This chain is Adenosylhomocysteinase, found in Nitrosomonas eutropha (strain DSM 101675 / C91 / Nm57).